Reading from the N-terminus, the 238-residue chain is Ribonuclease PH (238 aa).

Residues arginine 86 and 124–126 (GTR) each bind phosphate.

It belongs to the RNase PH family. In terms of assembly, homohexameric ring arranged as a trimer of dimers.

It catalyses the reaction tRNA(n+1) + phosphate = tRNA(n) + a ribonucleoside 5'-diphosphate. Phosphorolytic 3'-5' exoribonuclease that plays an important role in tRNA 3'-end maturation. Removes nucleotide residues following the 3'-CCA terminus of tRNAs; can also add nucleotides to the ends of RNA molecules by using nucleoside diphosphates as substrates, but this may not be physiologically important. Probably plays a role in initiation of 16S rRNA degradation (leading to ribosome degradation) during starvation. The sequence is that of Ribonuclease PH from Halorhodospira halophila (strain DSM 244 / SL1) (Ectothiorhodospira halophila (strain DSM 244 / SL1)).